We begin with the raw amino-acid sequence, 807 residues long: Glycerol-3-phosphate acyltransferase (807 aa).

The short motif at 308–313 is the HXXXXD motif element; the sequence is CHRSHM.

The protein belongs to the GPAT/DAPAT family.

The protein localises to the cell inner membrane. It catalyses the reaction sn-glycerol 3-phosphate + an acyl-CoA = a 1-acyl-sn-glycero-3-phosphate + CoA. Its pathway is phospholipid metabolism; CDP-diacylglycerol biosynthesis; CDP-diacylglycerol from sn-glycerol 3-phosphate: step 1/3. The protein is Glycerol-3-phosphate acyltransferase of Shewanella amazonensis (strain ATCC BAA-1098 / SB2B).